The sequence spans 1358 residues: Retrotransposon-like protein 1 (1358 aa).

Disordered regions lie at residues 1 to 159 (MIEP…TEHS) and 563 to 616 (ADVF…TAPW). Positions 19–30 (SSKQMESSEGSS) are enriched in low complexity. A compositionally biased stretch (acidic residues) spans 65–79 (EMEELPTDLLQDMEE). Basic and acidic residues predominate over residues 131-149 (AREEQEAHTDLKESGREET). Residues 583 to 592 (GSDDLSESEP) show a composition bias toward acidic residues. 2 consecutive transmembrane segments (helical) span residues 1083–1099 (LLYWKNTLALAAILVLL) and 1126–1146 (LILDSSLIAGSSITTAITQLL). 2 disordered regions span residues 1250 to 1283 (DGLQDTSQDKQDNDVQEAPPSHTAATHPPRPRHL) and 1338 to 1358 (QPREQARLEELPDEDEDANLD). Low complexity predominate over residues 1267 to 1276 (APPSHTAATH). The segment covering 1338 to 1347 (QPREQARLEE) has biased composition (basic and acidic residues). The span at 1348–1358 (LPDEDEDANLD) shows a compositional bias: acidic residues.

It is found in the membrane. Functionally, plays an essential role in capillaries endothelial cells for the maintenance of feto-maternal interface and for development of the placenta. The chain is Retrotransposon-like protein 1 (RTL1) from Homo sapiens (Human).